We begin with the raw amino-acid sequence, 88 residues long: Toxin ICK-12 (88 aa).

An N-terminal signal peptide occupies residues 1–19 (MKSIVYMLLFCTFTVVILG). 4 disulfide bridges follow: Cys41–Cys55, Cys41–Cys78, Cys54–Cys67, and Cys81–Cys88.

The protein belongs to the neurotoxin 27 (Jztx-72) family. ICK-41 subfamily. As to expression, expressed by the venom gland.

It localises to the secreted. In terms of biological role, probable neurotoxin with ion channel impairing activity. The sequence is that of Toxin ICK-12 from Trittame loki (Brush-footed trapdoor spider).